A 188-amino-acid chain; its full sequence is Elongation factor P (188 aa).

The protein belongs to the elongation factor P family.

It localises to the cytoplasm. It participates in protein biosynthesis; polypeptide chain elongation. In terms of biological role, involved in peptide bond synthesis. Stimulates efficient translation and peptide-bond synthesis on native or reconstituted 70S ribosomes in vitro. Probably functions indirectly by altering the affinity of the ribosome for aminoacyl-tRNA, thus increasing their reactivity as acceptors for peptidyl transferase. This Chlorobaculum parvum (strain DSM 263 / NCIMB 8327) (Chlorobium vibrioforme subsp. thiosulfatophilum) protein is Elongation factor P.